Reading from the N-terminus, the 93-residue chain is Large ribosomal subunit protein bL27 (93 aa).

Belongs to the bacterial ribosomal protein bL27 family.

This chain is Large ribosomal subunit protein bL27, found in Trichormus variabilis (strain ATCC 29413 / PCC 7937) (Anabaena variabilis).